A 461-amino-acid polypeptide reads, in one-letter code: MLKIFNTLTRQKEEFKPIHAGEVGMYVCGITVYDLCHIGHGRTFVSFDVVARYLRFLGYKLKYVRNITDIDDKIIKRANENGESFVALVDRMIAEMHKDFDALNILRPDSEPRATHHIAEIIEITEQLIAKGHAYVADNGDVMFDVPTDPNYGLLSRQDLDQLQAGARVDVVDVKRNPMDFVLWKMSKEGEPSWPSPWGAGRPGWHIECSAMNCKQLGNHFDIHGGGSDLMFPHHENEIAQSTCAHDGEYVNYWMHSGMVMVDREKMSKSLGNFFTVRDVLKYYDAETIRYFLMSGHYRSQLNYSEENLKQARSALERLYTALRGTDKSVDAAGGEAFEARFIEAMDDDFNTPEAYSVLFDMAREVNRLKTEDAAAANAMAAHLRKLAAVLGLLEQEPEAFLQSGAQVDDAEVAEIESLIQQRLDARKAKDWAAADAARDRLNEMGIVLEDGPQGTTWRRK.

Cysteine 28 provides a ligand contact to Zn(2+). Positions 30–40 match the 'HIGH' region motif; sequence ITVYDLCHIGH. Residues cysteine 209, histidine 234, and glutamate 238 each contribute to the Zn(2+) site. A 'KMSKS' region motif is present at residues 266–270; sequence KMSKS. Lysine 269 contributes to the ATP binding site.

It belongs to the class-I aminoacyl-tRNA synthetase family. As to quaternary structure, monomer. It depends on Zn(2+) as a cofactor.

The protein localises to the cytoplasm. It carries out the reaction tRNA(Cys) + L-cysteine + ATP = L-cysteinyl-tRNA(Cys) + AMP + diphosphate. The polypeptide is Cysteine--tRNA ligase (Klebsiella pneumoniae (strain 342)).